Consider the following 483-residue polypeptide: UDP-N-acetylmuramoyl-L-alanyl-D-glutamate--2,6-diaminopimelate ligase (483 aa).

Ser-30 lines the UDP-N-acetyl-alpha-D-muramoyl-L-alanyl-D-glutamate pocket. Position 109-115 (109-115) interacts with ATP; the sequence is GTNGKTT. Residues 151–152, Ser-178, and Arg-186 each bind UDP-N-acetyl-alpha-D-muramoyl-L-alanyl-D-glutamate; that span reads TT. N6-carboxylysine is present on Lys-218. Residues Arg-380, 403 to 406, Gly-453, and Glu-457 each bind meso-2,6-diaminopimelate; that span reads DNPR. A Meso-diaminopimelate recognition motif motif is present at residues 403–406; the sequence is DNPR.

Belongs to the MurCDEF family. MurE subfamily. It depends on Mg(2+) as a cofactor. Post-translationally, carboxylation is probably crucial for Mg(2+) binding and, consequently, for the gamma-phosphate positioning of ATP.

The protein resides in the cytoplasm. It catalyses the reaction UDP-N-acetyl-alpha-D-muramoyl-L-alanyl-D-glutamate + meso-2,6-diaminopimelate + ATP = UDP-N-acetyl-alpha-D-muramoyl-L-alanyl-gamma-D-glutamyl-meso-2,6-diaminopimelate + ADP + phosphate + H(+). The protein operates within cell wall biogenesis; peptidoglycan biosynthesis. In terms of biological role, catalyzes the addition of meso-diaminopimelic acid to the nucleotide precursor UDP-N-acetylmuramoyl-L-alanyl-D-glutamate (UMAG) in the biosynthesis of bacterial cell-wall peptidoglycan. The sequence is that of UDP-N-acetylmuramoyl-L-alanyl-D-glutamate--2,6-diaminopimelate ligase from Chlamydia trachomatis serovar A (strain ATCC VR-571B / DSM 19440 / HAR-13).